Here is a 148-residue protein sequence, read N- to C-terminus: Large ribosomal subunit protein bL9 (148 aa).

The protein belongs to the bacterial ribosomal protein bL9 family.

Binds to the 23S rRNA. In Desulfitobacterium hafniense (strain DSM 10664 / DCB-2), this protein is Large ribosomal subunit protein bL9.